The primary structure comprises 275 residues: Large ribosomal subunit protein uL2 (275 aa).

Residues 36 to 49 (TQSSTAGRNNNGRI) show a composition bias toward polar residues. 2 disordered regions span residues 36-59 (TQSS…GGHK) and 224-275 (AMNP…RHKR). Residues 50-59 (TTRHKGGGHK) show a composition bias toward basic residues.

Belongs to the universal ribosomal protein uL2 family. In terms of assembly, part of the 50S ribosomal subunit. Forms a bridge to the 30S subunit in the 70S ribosome.

In terms of biological role, one of the primary rRNA binding proteins. Required for association of the 30S and 50S subunits to form the 70S ribosome, for tRNA binding and peptide bond formation. It has been suggested to have peptidyltransferase activity; this is somewhat controversial. Makes several contacts with the 16S rRNA in the 70S ribosome. This Burkholderia vietnamiensis (strain G4 / LMG 22486) (Burkholderia cepacia (strain R1808)) protein is Large ribosomal subunit protein uL2.